We begin with the raw amino-acid sequence, 819 residues long: MTKSNGDVEAAAQVQSLGGKPSNGHGQLNGNGYHQNGGRRDSSQAFTPLLSQHNNGTTNGEVTTPPPSTVLYESTPSNNNEWKAPEDLGHLKNGLGNILSSNNNGTGNGHSLSEKYAHEQAPLTGGYKLPPRSSESEESDFDSDLNGGSSAESSSSCGLFGCRPRWARRFASTHVFMVVFLLAYILQGMYMTYFVSVITTIEKLFQIKSKTTGILLSASEMGQICTAMLLTYFAGRGHRPRWIACGMVLFSIAAFSCALPHFIFGEQLMHSSVILQQTQVSPPNNSFSSHWLNASSEQVNPNLCILGGNQTHSGSECNEERQLEQASHSKITVIVLCIFFGSLLSSGIGQTAVATLGIPYIDDNVGSKQSPMYMAVTIGMRILGPASGFIFGSFCTRWYVNFSNPGFDATDPRWIGAWWLGPVAIGSLMLLASIAMFSFPKQLRGKQKPPGQTATPAAPVEPEEKPKLKDFPKTVRRQLSNDILMFRTASCVFHLLPIAGLYTFLPKYLETQFRLATYDANMIAAFCGILVMGIGIVISGLFILKRKPTARGVAAWIAFTALVYSAGMIILMFIGCSMNDFAGYKPSDGNSPALIEPTCSAALNCTCDKENFAPICADGKMYISACHAGCSSSSLRPSDNRTLYSDCACIPDAPEAVNGYCDNNCKNFIYFILIFAICVFMHSTSEVGSMLLVMRCTHPKDKAMAMGVIQSAIGLFGNVPCPIIYGAVVDSACLIWKSVCGKHGACSLYDADTFRQYFLGITAGIMFLAFLMDLVVWRKAHRIDIAPEDPQEGGPASNGRTLEVSESKQPITPAPDTTV.

The disordered stretch occupies residues 1 to 157 (MTKSNGDVEA…GSSAESSSSC (157 aa)). At 1–174 (MTKSNGDVEA…RWARRFASTH (174 aa)) the chain is on the cytoplasmic side. 3 stretches are compositionally biased toward polar residues: residues 24–34 (GHGQLNGNGYH), 43–62 (SQAF…NGEV), and 71–81 (LYESTPSNNNE). Low complexity-rich tracts occupy residues 91-111 (LKNG…NGHS) and 144-157 (DLNG…SSSC). The chain crosses the membrane as a helical span at residues 175-195 (VFMVVFLLAYILQGMYMTYFV). Over 196–213 (SVITTIEKLFQIKSKTTG) the chain is Extracellular. Residues 214–234 (ILLSASEMGQICTAMLLTYFA) traverse the membrane as a helical segment. Residues 235–242 (GRGHRPRW) are Cytoplasmic-facing. A helical transmembrane segment spans residues 243–263 (IACGMVLFSIAAFSCALPHFI). Topologically, residues 264-332 (FGEQLMHSSV…LEQASHSKIT (69 aa)) are extracellular. 3 N-linked (GlcNAc...) asparagine glycosylation sites follow: Asn284, Asn293, and Asn309. Residues 333–353 (VIVLCIFFGSLLSSGIGQTAV) traverse the membrane as a helical segment. Over 354-373 (ATLGIPYIDDNVGSKQSPMY) the chain is Cytoplasmic. Residues 374 to 394 (MAVTIGMRILGPASGFIFGSF) traverse the membrane as a helical segment. At 395 to 413 (CTRWYVNFSNPGFDATDPR) the chain is on the extracellular side. Asn401 carries an N-linked (GlcNAc...) asparagine glycan. Residues 414–434 (WIGAWWLGPVAIGSLMLLASI) form a helical membrane-spanning segment. Topologically, residues 435 to 488 (AMFSFPKQLRGKQKPPGQTATPAAPVEPEEKPKLKDFPKTVRRQLSNDILMFRT) are cytoplasmic. The disordered stretch occupies residues 444 to 466 (RGKQKPPGQTATPAAPVEPEEKP). A helical transmembrane segment spans residues 489 to 509 (ASCVFHLLPIAGLYTFLPKYL). Topologically, residues 510-522 (ETQFRLATYDANM) are extracellular. Residues 523–543 (IAAFCGILVMGIGIVISGLFI) traverse the membrane as a helical segment. Over 544-553 (LKRKPTARGV) the chain is Cytoplasmic. A helical transmembrane segment spans residues 554 to 574 (AAWIAFTALVYSAGMIILMFI). Residues 575-667 (GCSMNDFAGY…NGYCDNNCKN (93 aa)) lie on the Extracellular side of the membrane. Positions 593 to 651 (ALIEPTCSAALNCTCDKENFAPICADGKMYISACHAGCSSSSLRPSDNRTLYSDCACIP) constitute a Kazal-like domain. 3 disulfide bridges follow: Cys599–Cys630, Cys607–Cys626, and Cys616–Cys649. An N-linked (GlcNAc...) asparagine glycan is attached at Asn604. Asn640 carries an N-linked (GlcNAc...) asparagine glycan. A helical transmembrane segment spans residues 668-688 (FIYFILIFAICVFMHSTSEVG). Residues 689–707 (SMLLVMRCTHPKDKAMAMG) are Cytoplasmic-facing. A helical membrane pass occupies residues 708-728 (VIQSAIGLFGNVPCPIIYGAV). Residues 729–756 (VDSACLIWKSVCGKHGACSLYDADTFRQ) lie on the Extracellular side of the membrane. The chain crosses the membrane as a helical span at residues 757–777 (YFLGITAGIMFLAFLMDLVVW). Residues 778-819 (RKAHRIDIAPEDPQEGGPASNGRTLEVSESKQPITPAPDTTV) lie on the Cytoplasmic side of the membrane. The interval 787–819 (PEDPQEGGPASNGRTLEVSESKQPITPAPDTTV) is disordered. Positions 807-819 (SKQPITPAPDTTV) are enriched in polar residues.

This sequence belongs to the organo anion transporter (TC 2.A.60) family.

The protein resides in the cell membrane. Transporter that mediates the cellular uptake of ecdysteroids, including ecdysone, from the hemolymph. The polypeptide is Solute carrier organic anion transporter family member 74D (Drosophila melanogaster (Fruit fly)).